The primary structure comprises 448 residues: Hydroxycinnamoyl-CoA:piscidic acid hydroxycinnamoyltransferase (448 aa).

Residues His153 and Asp395 each act as proton acceptor in the active site.

Belongs to the plant acyltransferase family. Highly expressed in root and rhizome. Expressed in senescent leaf and callus tissues. Expressed in detached leaf treated for 18 hours with ethephon, methyl jasmonate, salicylic acid or illuminated for 24 hours with UV light. Not expressed in mature leaf. Expressed at low levels in leaves and flowers.

It catalyses the reaction (2R,3S)-piscidate + (E)-4-coumaroyl-CoA = cimicifugate K + CoA. The enzyme catalyses (2R,3S)-piscidate + (E)-caffeoyl-CoA = cimicifugate D + CoA. It carries out the reaction (2R,3S)-piscidate + (E)-sinapoyl-CoA = cimicifugate J + CoA. The catalysed reaction is (2R,3S)-piscidate + (E)-feruloyl-CoA = cimicifugate E + CoA. It functions in the pathway phenylpropanoid metabolism. Catalyzes the formation of cimicifugic acids. Uses hydroxycinnamoyl-CoA thioesters as hydroxycinnamoyl donor substrates. Has a strict specificity for piscidic acid as an acceptor substrate as none of the various other acceptors tested including 4-hydroxyphenyllactic acid, malate, spermidine or tetrahydroxyhexanedioic acid are substrates. Donor substrates include 4-coumaroyl-CoA, caffeoyl-CoA, sinapoyl-CoA and feruloyl-CoA. No activity with cinnamoyl-CoA, isoferuloyl-CoA, 3,4-dimethoxycinnamoyl-CoA or 3,4-dihydroxybenzoyl-CoA as donors. In the reverse reaction with fukinolic acid and CoA as substrates, a formation of fukiic acid is evident. Hence, fukiic acid may also serve as an acceptor substrate. Involved in the biosynthesis of cimicifugic and possibly fukinolic acids. This Actaea racemosa (Black cohosh) protein is Hydroxycinnamoyl-CoA:piscidic acid hydroxycinnamoyltransferase.